The sequence spans 306 residues: Curved DNA-binding protein (306 aa).

The region spanning 5–69 is the J domain; the sequence is DYYAIMGVKP…QRRAEYDQMW (65 aa).

It is found in the cytoplasm. The protein localises to the nucleoid. Its function is as follows. DNA-binding protein that preferentially recognizes a curved DNA sequence. It is probably a functional analog of DnaJ; displays overlapping activities with DnaJ, but functions under different conditions, probably acting as a molecular chaperone in an adaptive response to environmental stresses other than heat shock. Lacks autonomous chaperone activity; binds native substrates and targets them for recognition by DnaK. Its activity is inhibited by the binding of CbpM. In Shigella sonnei (strain Ss046), this protein is Curved DNA-binding protein.